A 196-amino-acid polypeptide reads, in one-letter code: Imidazole glycerol phosphate synthase subunit HisH (196 aa).

Residues 2–196 (KIIIINTNCS…EQLIKNFLEI (195 aa)) enclose the Glutamine amidotransferase type-1 domain. The Nucleophile role is filled by Cys77. Residues His178 and Glu180 contribute to the active site.

As to quaternary structure, heterodimer of HisH and HisF.

The protein resides in the cytoplasm. It carries out the reaction 5-[(5-phospho-1-deoxy-D-ribulos-1-ylimino)methylamino]-1-(5-phospho-beta-D-ribosyl)imidazole-4-carboxamide + L-glutamine = D-erythro-1-(imidazol-4-yl)glycerol 3-phosphate + 5-amino-1-(5-phospho-beta-D-ribosyl)imidazole-4-carboxamide + L-glutamate + H(+). The enzyme catalyses L-glutamine + H2O = L-glutamate + NH4(+). It functions in the pathway amino-acid biosynthesis; L-histidine biosynthesis; L-histidine from 5-phospho-alpha-D-ribose 1-diphosphate: step 5/9. Its function is as follows. IGPS catalyzes the conversion of PRFAR and glutamine to IGP, AICAR and glutamate. The HisH subunit catalyzes the hydrolysis of glutamine to glutamate and ammonia as part of the synthesis of IGP and AICAR. The resulting ammonia molecule is channeled to the active site of HisF. This is Imidazole glycerol phosphate synthase subunit HisH from Blochmanniella floridana.